The following is a 162-amino-acid chain: Ribosome maturation factor RimP (162 aa).

Belongs to the RimP family.

The protein localises to the cytoplasm. Its function is as follows. Required for maturation of 30S ribosomal subunits. The sequence is that of Ribosome maturation factor RimP from Cupriavidus metallidurans (strain ATCC 43123 / DSM 2839 / NBRC 102507 / CH34) (Ralstonia metallidurans).